The chain runs to 120 residues: Putative iron-sulfur cluster insertion protein ErpA (120 aa).

Residues C49, C113, and C115 each coordinate iron-sulfur cluster.

Belongs to the HesB/IscA family. Homodimer. Iron-sulfur cluster serves as cofactor.

Required for insertion of 4Fe-4S clusters. This chain is Putative iron-sulfur cluster insertion protein ErpA, found in Albidiferax ferrireducens (strain ATCC BAA-621 / DSM 15236 / T118) (Rhodoferax ferrireducens).